Here is an 885-residue protein sequence, read N- to C-terminus: Alanine--tRNA ligase (885 aa).

Residues 426 to 444 (QEQKTRARQDRREKQRGGA) show a composition bias toward basic and acidic residues. Residues 426-445 (QEQKTRARQDRREKQRGGAE) are disordered. Zn(2+) contacts are provided by H568, H572, C671, and H675.

The protein belongs to the class-II aminoacyl-tRNA synthetase family. It depends on Zn(2+) as a cofactor.

The protein localises to the cytoplasm. It carries out the reaction tRNA(Ala) + L-alanine + ATP = L-alanyl-tRNA(Ala) + AMP + diphosphate. In terms of biological role, catalyzes the attachment of alanine to tRNA(Ala) in a two-step reaction: alanine is first activated by ATP to form Ala-AMP and then transferred to the acceptor end of tRNA(Ala). Also edits incorrectly charged Ser-tRNA(Ala) and Gly-tRNA(Ala) via its editing domain. The polypeptide is Alanine--tRNA ligase (Chlorobium phaeovibrioides (strain DSM 265 / 1930) (Prosthecochloris vibrioformis (strain DSM 265))).